The chain runs to 564 residues: Phosphomethylpyrimidine synthase (564 aa).

Residues Asn203, Met232, Tyr261, His297, 317–319 (SRG), 358–361 (DGLR), and Glu397 contribute to the substrate site. His401 is a binding site for Zn(2+). Tyr424 is a binding site for substrate. His465 serves as a coordination point for Zn(2+). [4Fe-4S] cluster is bound by residues Cys541, Cys544, and Cys549.

Belongs to the ThiC family. Requires [4Fe-4S] cluster as cofactor.

It carries out the reaction 5-amino-1-(5-phospho-beta-D-ribosyl)imidazole + S-adenosyl-L-methionine = 4-amino-2-methyl-5-(phosphooxymethyl)pyrimidine + CO + 5'-deoxyadenosine + formate + L-methionine + 3 H(+). The protein operates within cofactor biosynthesis; thiamine diphosphate biosynthesis. In terms of biological role, catalyzes the synthesis of the hydroxymethylpyrimidine phosphate (HMP-P) moiety of thiamine from aminoimidazole ribotide (AIR) in a radical S-adenosyl-L-methionine (SAM)-dependent reaction. In Bacteroides fragilis (strain ATCC 25285 / DSM 2151 / CCUG 4856 / JCM 11019 / LMG 10263 / NCTC 9343 / Onslow / VPI 2553 / EN-2), this protein is Phosphomethylpyrimidine synthase.